The sequence spans 397 residues: MASSMASNDFQLPPRFFTVFVSHFSSEFMVIPVSYYDHIPHRFPKTVILRGPGGCSWKVATEIKDDEVLFSQGWPKFVRDNTLNDGDFLTFAYNGAHIFEVSIFRGYDACKEISEVTELEEEEEDSVISLSSEDTDTGAKSEMKNTVPEGRDKGKSKVEVVEDSDDDEEEDSVYSESSEETETDTDSEFKVAKPTIPKSQKKGKKKEQVVESSDDEEDEEEDSDSDYIETFGQLDIEENSISEEDSSYAPDKEDTATASFVKPKVANKVANLKRKEAAKKRKKVDPMIKNPERYLDDPKNIHFETNVKNRLYELLVHAQLVKDYCLRFGDYVNYIDRFGKLSAKTAKWKDQRVCIKRWMRICKRNKLKKEDRILCELLRKGTFVYAIKLHVIRGKDL.

The segment at residues P14–Y107 is a DNA-binding region (TF-B3). The tract at residues E118–T255 is disordered. Basic and acidic residues predominate over residues T137 to V160. 3 stretches are compositionally biased toward acidic residues: residues V161–D186, S212–Y227, and D235–S246.

Its subcellular location is the nucleus. The polypeptide is B3 domain-containing protein At4g34400 (Arabidopsis thaliana (Mouse-ear cress)).